The primary structure comprises 3658 residues: E3 ubiquitin-protein ligase UPL2 (3658 aa).

Residues 884–893 are compositionally biased toward basic and acidic residues; the sequence is DEKKSVDRAS. The tract at residues 884–914 is disordered; it reads DEKKSVDRASDNSVSASSSTAERESDEDSSN. Positions 894 to 903 are enriched in low complexity; that stretch reads DNSVSASSST. Residues 1271–1312 form the UBA domain; it reads QPDEAIVGMIVEMGFSRSRAEDALRRVGTNSVEMAMDWLFTN. The 20-residue stretch at 1318 to 1337 folds into the UIM domain; that stretch reads QEDDELAQALALSLGNSSET. 9 disordered regions span residues 1331–1360, 1702–1733, 2004–2038, 2052–2072, 2113–2204, 2293–2313, 2417–2487, 2503–2591, and 2958–2987; these read LGNSSETPKLEDTEKPVDVPQEEAEPKEPP, VSGSEHGFSLNEPLGISENKLHDGSGKCSKSH, AEQLKSEVPNEQKNTDSDERHDSHGTSTSTEVDEL, VDNGQEQPQVSSQSEGERGSS, HVED…DDMV, PLFSRPSQTGNTASVSASAGS, ERET…EGGG, SAQG…PEVN, and SPSSGVPEKLENKPVGEEASSETQKDAESE. Positions 1338-1347 are enriched in basic and acidic residues; it reads PKLEDTEKPV. Residues 2007-2027 show a composition bias toward basic and acidic residues; the sequence is LKSEVPNEQKNTDSDERHDSH. Residues 2028–2038 show a composition bias toward polar residues; sequence GTSTSTEVDEL. Composition is skewed to acidic residues over residues 2117 to 2144 and 2156 to 2204; these read RADDDVDDDMDDEGEDDEGDDEDADSVE and DVED…DDMV. Residues 2297–2313 show a composition bias toward polar residues; that stretch reads RPSQTGNTASVSASAGS. A compositionally biased stretch (low complexity) spans 2422–2431; it reads TTEVQEQQQP. Positions 2503-2518 are enriched in polar residues; sequence SAQGQSDTSGIQNVSV. S2582 carries the phosphoserine modification. Residues 3317–3658 enclose the HECT domain; sequence SPQDLKGRLN…HEANEGFGFA (342 aa). C3625 functions as the Glycyl thioester intermediate in the catalytic mechanism.

The protein belongs to the UPL family. TOM1/PTR1 subfamily. As to expression, widely expressed. Expressed in root, stem, cauline and rosette leaf, seedling and flower (at protein level).

The catalysed reaction is S-ubiquitinyl-[E2 ubiquitin-conjugating enzyme]-L-cysteine + [acceptor protein]-L-lysine = [E2 ubiquitin-conjugating enzyme]-L-cysteine + N(6)-ubiquitinyl-[acceptor protein]-L-lysine.. The protein operates within protein modification; protein ubiquitination. Its function is as follows. Probable E3 ubiquitin-protein ligase which mediates ubiquitination and subsequent proteasomal degradation of target proteins. The polypeptide is E3 ubiquitin-protein ligase UPL2 (UPL2) (Arabidopsis thaliana (Mouse-ear cress)).